Reading from the N-terminus, the 472-residue chain is Pyridine nucleotide-disulfide oxidoreductase domain-containing protein 1 (472 aa).

This sequence belongs to the class-I pyridine nucleotide-disulfide oxidoreductase family. PYROXD1 subfamily. Requires FAD as cofactor.

Its function is as follows. Probable oxidoreductase. The polypeptide is Pyridine nucleotide-disulfide oxidoreductase domain-containing protein 1 (Drosophila melanogaster (Fruit fly)).